Consider the following 213-residue polypeptide: Urease accessory protein UreG (213 aa).

12–19 is a GTP binding site; sequence GPVGSGKT.

This sequence belongs to the SIMIBI class G3E GTPase family. UreG subfamily. In terms of assembly, homodimer. UreD, UreF and UreG form a complex that acts as a GTP-hydrolysis-dependent molecular chaperone, activating the urease apoprotein by helping to assemble the nickel containing metallocenter of UreC. The UreE protein probably delivers the nickel.

The protein resides in the cytoplasm. Its function is as follows. Facilitates the functional incorporation of the urease nickel metallocenter. This process requires GTP hydrolysis, probably effectuated by UreG. The polypeptide is Urease accessory protein UreG (Marinomonas sp. (strain MWYL1)).